We begin with the raw amino-acid sequence, 2594 residues long: Immunoglobulin superfamily member 10 (2594 aa).

A signal peptide spans 1-25; that stretch reads MQKRGREVSCLLISLTAICLVVTPG. The region spanning 29–56 is the LRRNT domain; the sequence is CPRRCACYVPTEVHCTFRYLTSIPDGIP. LRR repeat units lie at residues 58–79, 82–103, 106–127, 130–151, 154–175, and 186–207; these read NVERVNLGYNSLTRLTENDFSG, RLELLMLHSNGIHRVSDKTFSG, SLQVLKMSYNKVQIIEKDTLYG, SLTRLHLDHNNIEFINPEAFYG, LLRLVHLEGNRLTKLHPDTFVS, and FIKYLYLSDNFLTSLPKEMVSS. Residues 219-281 enclose the LRRCT domain; it reads NPWTCDCHLK…VPSGSFLCTK (63 aa). Asn-439 carries an N-linked (GlcNAc...) asparagine glycan. Ig-like C2-type domains lie at 461–567 and 571–661; these read PKAE…YRIT and PYVE…FQVS. Cystine bridges form between Cys-497–Cys-551 and Cys-595–Cys-645. Asn-627 carries N-linked (GlcNAc...) asparagine glycosylation. Basic and acidic residues predominate over residues 670 to 685; sequence IEHDRDIDGSGLEEPK. Disordered regions lie at residues 670–725 and 963–1008; these read IEHD…RDLT and VSSN…GRER. The segment covering 715–725 has biased composition (basic residues); sequence IHKKNKHRDLT. Over residues 972–984 the composition is skewed to basic and acidic residues; the sequence is TTKDPGFSKRPSD. Over residues 985–1003 the composition is skewed to polar residues; it reads SHTTAPSLFQTPRNNSTGN. N-linked (GlcNAc...) asparagine glycosylation is present at Asn-1044. Disordered regions lie at residues 1228–1251, 1333–1364, and 1428–1457; these read TATKPPEKAPLLPTDHGSSSPSTT, VRSKKAKDQTKGSLKNRKGPTITPRQISGYST, and SQESTAMKRASATPPLLSSGAPRMPTPSPP. The segment covering 1333 to 1342 has biased composition (basic and acidic residues); the sequence is VRSKKAKDQT. Over residues 1355 to 1364 the composition is skewed to polar residues; sequence TPRQISGYST. 10 consecutive Ig-like C2-type domains span residues 1619–1710, 1715–1807, 1812–1901, 1912–2005, 2008–2106, 2112–2200, 2205–2302, 2308–2398, 2403–2493, and 2499–2592; these read PRII…VTLS, PARI…VKIQ, PPVI…RRVV, PRIE…VRLR, PAKI…VHLT, PRIR…YKLD, PPLI…LKVL, PTFR…ILLE, PVIL…VPVT, and PRII…TYIQ. 3 cysteine pairs are disulfide-bonded: Cys-1641–Cys-1694, Cys-1738–Cys-1791, and Cys-1835–Cys-1888. Residues 1658–1681 form an LRR 11 repeat; it reads SGREISRGIQKTRFHVLPNGTLSI. N-linked (GlcNAc...) asparagine glycans are attached at residues Asn-1676, Asn-1780, Asn-1870, and Asn-1933. Disulfide bonds link Cys-1934–Cys-1987, Cys-2031–Cys-2090, Cys-2134–Cys-2184, Cys-2232–Cys-2284, Cys-2330–Cys-2382, Cys-2425–Cys-2477, and Cys-2521–Cys-2576. A glycan (N-linked (GlcNAc...) asparagine) is linked at Asn-2072. Residue Asn-2364 is glycosylated (N-linked (GlcNAc...) asparagine). Tyr-2574 carries the post-translational modification Phosphotyrosine.

In the embryo, expressed in the nasal mesenchyme.

Its subcellular location is the secreted. Functionally, involved in the control of early migration of neurons expressing gonadotropin-releasing hormone (GNRH neurons). May be involved in the maintenance of osteochondroprogenitor cells pool. The polypeptide is Immunoglobulin superfamily member 10 (Igsf10) (Mus musculus (Mouse)).